The sequence spans 221 residues: Large ribosomal subunit protein bL25 (221 aa).

The segment at 192–221 (APRVEKEETEEDTVAPGDVPAENSKDADEE) is disordered.

It belongs to the bacterial ribosomal protein bL25 family. CTC subfamily. As to quaternary structure, part of the 50S ribosomal subunit; part of the 5S rRNA/L5/L18/L25 subcomplex. Contacts the 5S rRNA. Binds to the 5S rRNA independently of L5 and L18.

Its function is as follows. This is one of the proteins that binds to the 5S RNA in the ribosome where it forms part of the central protuberance. In Idiomarina loihiensis (strain ATCC BAA-735 / DSM 15497 / L2-TR), this protein is Large ribosomal subunit protein bL25.